Here is a 306-residue protein sequence, read N- to C-terminus: Homeobox protein Hox-C13a (306 aa).

The tract at residues 68 to 90 is disordered; the sequence is SVYSDISSPDTGRQCPAPQTSSS. Positions 236–295 form a DNA-binding region, homeobox; sequence GRKKRVPYTKLQLKELEKEYAASKFITKDKRRRISAATNLSERQVTIWFQNRRVKEKKFI.

This sequence belongs to the Abd-B homeobox family.

Its subcellular location is the nucleus. Its function is as follows. Sequence-specific transcription factor which is part of a developmental regulatory system that provides cells with specific positional identities on the anterior-posterior axis. The chain is Homeobox protein Hox-C13a (hoxc13a) from Takifugu rubripes (Japanese pufferfish).